The sequence spans 83 residues: Arminin 4364 (83 aa).

The signal sequence occupies residues 1-18 (MKTVFAILFLAFIALTYA). Residues 19–55 (RSYEDVKEEIKNEVEKEILEDLEKETDELNERKINDA) constitute a propeptide that is removed on maturation. Residue valine 80 is modified to Valine amide.

This sequence belongs to the arminin family. Expressed in entodermal epithelium along the body column.

Its subcellular location is the secreted. It localises to the target cell membrane. Functionally, antimicrobial peptide with a broad-spectrum antimicrobial activity. Keeps its antibacterial activity under a wide range of salt concentrations that mimic physiological conditions of human blood, which is surprising, since Hydra is an obligate freshwater animal with nearly no salt tolerance. Does not affect red blood cells. This is Arminin 4364 from Hydra vulgaris (Hydra).